An 83-amino-acid polypeptide reads, in one-letter code: MIKVNVLYFGAVREACDETPREEVEVQNGTDVGNLVDQLQQKYPRLRDHCQRVQMAVNQFIAPLSTVLGDGDEVAFIPQVAGG.

Belongs to the MoaD family.

Its pathway is cofactor biosynthesis; molybdopterin biosynthesis. In terms of biological role, involved in sulfur transfer in the conversion of molybdopterin precursor Z to molybdopterin. Probably plays a role in host phagosome maturation arrest. This Mycobacterium tuberculosis (strain ATCC 25618 / H37Rv) protein is Molybdopterin synthase sulfur carrier subunit (moaD1).